A 524-amino-acid polypeptide reads, in one-letter code: Unconventional prefoldin RPB5 interactor (524 aa).

Disordered stretches follow at residues 1 to 20 (MEAP…LRAP), 284 to 320 (SVNG…EDNS), and 335 to 373 (VRIN…ELPM). Residues 296 to 307 (DDGDNNDDGGDS) are compositionally biased toward acidic residues. Ser361 bears the Phosphoserine; by RPS6KB1 mark. Phosphoserine is present on Ser431.

This sequence belongs to the RNA polymerase II subunit 5-mediating protein family. Homodimer. Component of the PAQosome complex which is responsible for the biogenesis of several protein complexes and which consists of R2TP complex members RUVBL1, RUVBL2, RPAP3 and PIH1D1, URI complex members PFDN2, PFDN6, PDRG1, UXT and URI1 as well as ASDURF, POLR2E and DNAAF10/WDR92. Interacts with POLR2E/RPB5, RUVBL2 and RUVBL1. Interacts with PFDN2, PFDN4 and STAP1; the interactions are phosphorylation-dependent and occur in a growth-dependent manner in the mitochondrion. Interacts with UXT. Interacts with PPP1CC; the interaction is phosphorylation-dependent and occurs in a growth factor-dependent manner. Interacts (via the middle C-terminal region) with GTF2F1 and GTF2F2. Interacts with DMAP1. Interacts with TSC1 and TSC2. Interacts with PRPF8 and EFTUD2 in a ZNHIT2-dependent manner. In terms of processing, phosphorylated. Phosphorylation occurs essentially on serine residues. Phosphorylation occurs in response to androgen treatment in prostate cancer cells in a mTOR-dependent manner. Phosphorylated; hyperhosphorylated in mitochondria in a mTORC-dependent signaling pathway. Phosphorylated at Ser-361 by RPS6KB1 in a growth factor- and rapamycin-dependent manner. S6K1-mediated mitochondrial phosphorylation at Ser-361 disrupts the URI1-PPP1CC complex in the mitochondrion, relieves PPP1CC phosphatase inhibition activity and hence engages a negative feedback diminishing RPS6KB1 kinase activity, preventing sustained S6K1-dependent signaling.

It localises to the nucleus. Its subcellular location is the cytoplasm. The protein localises to the mitochondrion. The protein resides in the cell projection. It is found in the dendrite. Involved in gene transcription regulation. Acts as a transcriptional repressor in concert with the corepressor UXT to regulate androgen receptor (AR) transcription. May act as a tumor suppressor to repress AR-mediated gene transcription and to inhibit anchorage-independent growth in prostate cancer cells. Required for cell survival in ovarian cancer cells. Together with UXT, associates with chromatin to the NKX3-1 promoter region. Functionally, plays a central role in maintaining S6K1 signaling and BAD phosphorylation under normal growth conditions thereby protecting cells from potential deleterious effects of sustained S6K1 signaling. The URI1-PPP1CC complex acts as a central component of a negative feedback mechanism that counteracts excessive S6K1 survival signaling to BAD in response to growth factors. Mediates inhibition of PPP1CC phosphatase activity in mitochondria. Coordinates the regulation of nutrient-sensitive gene expression availability in a mTOR-dependent manner. Seems to be a scaffolding protein able to assemble a prefoldin-like complex that contains PFDs and proteins with roles in transcription and ubiquitination. The protein is Unconventional prefoldin RPB5 interactor (URI1) of Bos taurus (Bovine).